Consider the following 342-residue polypeptide: dTDP-3,4-didehydro-2,6-dideoxy-alpha-D-glucose 3-reductase (342 aa).

Residue 19 to 25 (CADIALR) participates in NADP(+) binding. Residue Arg26 coordinates substrate. Residues 44–45 (SR), Tyr65, Leu81, and His86 contribute to the NADP(+) site. Lys104 (proton donor) is an active-site residue. NADP(+) is bound by residues Arg172 and Asp184. Tyr243 and Ser263 together coordinate substrate.

The protein belongs to the Gfo/Idh/MocA family.

The enzyme catalyses dTDP-4-dehydro-2,6-dideoxy-alpha-D-glucose + NADP(+) = dTDP-3,4-didehydro-2,6-dideoxy-alpha-D-glucose + NADPH + H(+). The protein operates within antibiotic biosynthesis; granaticin biosynthesis. In terms of biological role, involved in the biosynthesis of the 2,6-deoxysugar, dTDP-L-rhodinose, attached to the benzoisochromane quinone chromophore to produce the aglycone antibiotics granaticin and granaticin B. Catalyzes the reduction of the C-3 keto moiety of dTDP-3,4-diketo-2,6-dideoxy-alpha-D-glucose to yield dTDP-4-keto-2,6-dideoxy-alpha-D-glucose. NADPH is the better reductant, however NADH can also be used. The polypeptide is dTDP-3,4-didehydro-2,6-dideoxy-alpha-D-glucose 3-reductase (Streptomyces violaceoruber).